Here is a 196-residue protein sequence, read N- to C-terminus: MESRVVFESDLNLKATELRLGLPGTEEKEDNNLRTHAVLRNNKRQVRETSQDSVSISKASHHQQHVETVSAPPPKAKIVGWPPIRSYRKNSVQEGEGDGIFVKVSMDGAPYLRKVDLKVYGGYPELLKALETMFKLAIGEYSEREGYKGSEYAPTYEDKDGDWMLVGDVPWDMFVTSCKRLRIMKGSEARGLGCVV.

The EAR-like (transcriptional repression) signature appears at 18–22; sequence LRLGL. A disordered region spans residues 44 to 74; it reads RQVRETSQDSVSISKASHHQQHVETVSAPPP. One can recognise a PB1 domain in the interval 99–186; it reads GIFVKVSMDG…SCKRLRIMKG (88 aa).

Belongs to the Aux/IAA family. Homodimers and heterodimers.

The protein resides in the nucleus. Its function is as follows. Aux/IAA proteins are short-lived transcriptional factors that function as repressors of early auxin response genes at low auxin concentrations. Repression is thought to result from the interaction with auxin response factors (ARFs), proteins that bind to the auxin-responsive promoter element (AuxRE). Formation of heterodimers with ARF proteins may alter their ability to modulate early auxin response genes expression. The chain is Auxin-induced protein 22B (AUX22B) from Vigna radiata var. radiata (Mung bean).